A 1826-amino-acid polypeptide reads, in one-letter code: Kinesin-like protein KIF13B (1826 aa).

In terms of domain architecture, Kinesin motor spans 5–353; the sequence is KVKVAVRIRP…LRYADRAKHI (349 aa). 103–110 lines the ATP pocket; that stretch reads GQTGSGKS. Residues 364–439 adopt a coiled-coil conformation; sequence NARIIRDLRE…ESLGISLQSS (76 aa). The region spanning 471 to 535 is the FHA domain; that stretch reads TLIGSANSQD…LHHGDRILWG (65 aa). A disordered region spans residues 546–582; the sequence is KKKKKAEREDEDQDPSMKNENSSEQLDVDGDSSSEVS. Polar residues predominate over residues 561-570; sequence SMKNENSSEQ. Coiled-coil stretches lie at residues 607–710, 752–772, and 1096–1143; these read MQSI…LDKR, SLEK…EWKE, and LNAL…ERNA. Residue serine 661 is modified to Phosphoserine. The interval 1367–1420 is disordered; sequence EQLTGKGKLSRRSISSPNVNRLSGSRQDLIPSYSLGSNKGRWESQQDVSQTTVS. Composition is skewed to polar residues over residues 1378–1392 and 1409–1420; these read RSIS…SGSR and ESQQDVSQTTVS. Position 1379 is a phosphoserine (serine 1379). At serine 1381 the chain carries Phosphoserine; by MARK2. Serine 1382 and serine 1391 each carry phosphoserine. Serine 1410 is modified (phosphoserine; by MARK2). 3 positions are modified to phosphoserine: serine 1432, serine 1438, and serine 1537. Threonine 1545 is subject to Phosphothreonine. Serine 1559 carries the post-translational modification Phosphoserine. Positions 1579-1607 are enriched in low complexity; it reads SDALGPGLDAAAPPGSMPTAPEAEPEAPI. Disordered regions lie at residues 1579-1650 and 1662-1698; these read SDAL…RVRR and MLAG…DEVP. Residues 1608–1624 are compositionally biased toward pro residues; it reads SHPPPPTAVPAEEPPGP. Serine 1644 bears the Phosphoserine mark. The segment covering 1671 to 1688 has biased composition (low complexity); the sequence is PGAEGNAPAPGAGGQALA. The 43-residue stretch at 1721–1763 folds into the CAP-Gly domain; it reads GPADFQEGTWVGVELDLPSGKNDGSIGGKQYFRCNPGYGLLVR. Serine 1797 carries the post-translational modification Phosphoserine.

This sequence belongs to the TRAFAC class myosin-kinesin ATPase superfamily. Kinesin family. In terms of assembly, binds to DLG1 and DLG4. Interacts (when phosphorylated at Ser-1381 and Ser-1410) with 14-3-3. In terms of processing, phosphorylated at Ser-1381 and Ser-1410 by MARK2, promoting interaction with 14-3-3 and inhibiting microtubule-dependent accumulation and formation of axons. As to expression, ubiquitous.

It localises to the cytoplasm. The protein localises to the cytoskeleton. Its subcellular location is the cell projection. The protein resides in the axon. Involved in reorganization of the cortical cytoskeleton. Regulates axon formation by promoting the formation of extra axons. May be functionally important for the intracellular trafficking of MAGUKs and associated protein complexes. In Homo sapiens (Human), this protein is Kinesin-like protein KIF13B (KIF13B).